Reading from the N-terminus, the 166-residue chain is Probable chemoreceptor glutamine deamidase CheD 1 (166 aa).

The protein belongs to the CheD family.

It carries out the reaction L-glutaminyl-[protein] + H2O = L-glutamyl-[protein] + NH4(+). Probably deamidates glutamine residues to glutamate on methyl-accepting chemotaxis receptors (MCPs), playing an important role in chemotaxis. This is Probable chemoreceptor glutamine deamidase CheD 1 from Leptospira interrogans serogroup Icterohaemorrhagiae serovar copenhageni (strain Fiocruz L1-130).